A 595-amino-acid polypeptide reads, in one-letter code: Pyranose dehydrogenase (595 aa).

Positions 1 to 21 (MARFNARLFSIAILGFQVARS) are cleaved as a signal peptide. N-linked (GlcNAc...) asparagine glycosylation is found at Asn95 and Asn110. The residue at position 123 (His123) is a Tele-8alpha-FAD histidine. 5 N-linked (GlcNAc...) asparagine glycosylation sites follow: Asn195, Asn337, Asn367, Asn502, and Asn510. His530 serves as the catalytic Proton acceptor. Asn541 carries an N-linked (GlcNAc...) asparagine glycan. The active site involves His574.

It belongs to the GMC oxidoreductase family. Monomer. FAD is required as a cofactor. N-glycosylated.

It localises to the secreted. The catalysed reaction is pyranose + acceptor = pyranos-2-ulose + reduced acceptor.. The enzyme catalyses pyranose + acceptor = pyranos-3-ulose + reduced acceptor.. It catalyses the reaction pyranose + acceptor = pyranos-2,3-diulose + reduced acceptor.. It carries out the reaction a pyranoside + acceptor = a pyranosid-3-ulose + reduced acceptor.. The catalysed reaction is a pyranoside + acceptor = a pyranosid-3,4-diulose + reduced acceptor.. Its function is as follows. Catalyzes the single-oxidation or sequential double oxidation reaction of carbohydrates primarily at carbon-2 and/or carbon-3 with the concomitant reduction of the flavin. The enzyme exhibits a broad sugar substrate specificity, oxidizing different aldopyranoses to the corresponding C-1, C-2, C-3 or C-1,2, C-2,3 and C-3,4 (di)dehydro sugars with substrate-specific regioselectivity. Accepts only a narrow range of electron acceptors such as substituted benzoquinones and complexed metal ions and reacts extremely slowly with O(2) as acceptor. May play a role in the natural recycling of plant matter by oxidizing all major monosaccharides in lignocellulose and by reducing quinone compounds or reactive radical species generated during lignin depolymerization. The protein is Pyranose dehydrogenase of Agaricus campestris (Field mushroom).